The primary structure comprises 1416 residues: Isonitrile lipopeptide synthase (1416 aa).

The stretch at 188 to 215 forms a coiled coil; that stretch reads LRETAKVAEALRRQADAVQRELTAEAGQ. In terms of domain architecture, Carrier spans 965-1028; that stretch reads RVWSRHLGRP…NLVCDLGSNP (64 aa). Residue Ser-988 is modified to O-(pantetheine 4'-phosphoryl)serine.

The protein belongs to the ATP-dependent AMP-binding enzyme family. Pantetheine 4'-phosphate serves as cofactor.

The enzyme catalyses 2 a (3R)-3-isocyanyl-fatty acyl-[ACP] + L-lysine + ATP + 2 NADPH = an isonitrile lipopeptide + 2 holo-[ACP] + AMP + diphosphate + 2 NADP(+). Nonribosomal peptide synthetase (NRPS) involved in the biosynthesis of a unique class of isonitrile lipopeptides (INLPs) that seem to play a role in metal acquisition in M.marinum. Catalyzes the final step in the pathway, i.e. the condensation of a (3R)-3-isocyanyl-fatty acyl-[ACP] to both amino groups of a lysine, producing isonitrile lipopeptides. The sequence is that of Isonitrile lipopeptide synthase from Mycobacterium marinum (strain ATCC BAA-535 / M).